Consider the following 899-residue polypeptide: Translation initiation factor IF-2 (899 aa).

Disordered regions lie at residues 116-135 (AKAR…ARLQ), 170-189 (RGGG…EQKK), and 262-306 (DREI…ANKH). The region spanning 399–568 (TRPPVVTIMG…LIQSELMELK (170 aa)) is the tr-type G domain. Residues 408 to 415 (GHVDHGKT) form a G1 region. 408 to 415 (GHVDHGKT) is a binding site for GTP. A G2 region spans residues 433-437 (GITQH). Residues 454 to 457 (DTPG) form a G3 region. GTP contacts are provided by residues 454–458 (DTPGH) and 508–511 (NKMD). Residues 508-511 (NKMD) form a G4 region. The G5 stretch occupies residues 544–546 (SAH).

The protein belongs to the TRAFAC class translation factor GTPase superfamily. Classic translation factor GTPase family. IF-2 subfamily.

The protein localises to the cytoplasm. One of the essential components for the initiation of protein synthesis. Protects formylmethionyl-tRNA from spontaneous hydrolysis and promotes its binding to the 30S ribosomal subunits. Also involved in the hydrolysis of GTP during the formation of the 70S ribosomal complex. In Acinetobacter baumannii (strain AB307-0294), this protein is Translation initiation factor IF-2.